The chain runs to 157 residues: Cell cycle regulator of non-homologous end joining (157 aa).

M1 is subject to N-acetylmethionine. A KBM motif is present at residues 1 to 21 (METLKSKTKTRVLPSWMTAPV). The span at 80–91 (KPWEQRSLEATD) shows a compositional bias: basic and acidic residues. The tract at residues 80–148 (KPWEQRSLEA…EEEKEEEDAL (69 aa)) is disordered. Positions 96–106 (SPPCSSSPGSS) are enriched in low complexity. The XLM signature appears at 147–157 (ALKYVREIFFS).

Interacts (via KBM motif) with XRCC5/Ku80 and XRCC6/Ku70 heterodimer. Interacts (via XLF motif) with TRIM28/KAP1, ATM, MRE11, NBN and RAD50. Interacts with splicing factor SF3B1. Interacts with ERCC6L2; this interaction is DNA independent.

The protein localises to the cytoplasm. The protein resides in the nucleus. It is found in the chromosome. Its function is as follows. Cell-cycle-specific regulator of classical non-homologous end joining (NHEJ) of DNA double-strand break (DSB) repair, which can act both as an activator or inhibitor of NHEJ, depending on the cell cycle phase. Acts as a regulator of DNA repair pathway choice by specifically inhibiting classical NHEJ during the S and G2 phases, thereby promoting error-free repair by homologous recombination during cell cycle phases when sister chromatids are present. Preferentially protects single-stranded overhangs at break sites by inhibiting classical NHEJ, thereby creating a local environment that favors homologous recombination. Acts via interaction with XRCC5/Ku80 and XRCC6/Ku70. In contrast, acts as an activator of NHEJ during G1 phase of the cell cycle: promotes classical NHEJ in G1 phase cells via multivalent interactions that increase the affinity of DNA damage response proteins for DSB-associated chromatin. Also involved in immunoglobulin V(D)J recombination. May also act as an indirect regulator of proteasome. In Mus musculus (Mouse), this protein is Cell cycle regulator of non-homologous end joining.